Here is a 129-residue protein sequence, read N- to C-terminus: Putative membrane protein insertion efficiency factor (129 aa).

The protein belongs to the UPF0161 family.

The protein localises to the cell inner membrane. Could be involved in insertion of integral membrane proteins into the membrane. The sequence is that of Putative membrane protein insertion efficiency factor from Rhodopseudomonas palustris (strain ATCC BAA-98 / CGA009).